A 111-amino-acid polypeptide reads, in one-letter code: Cytochrome c oxidase subunit 7A2-like, mitochondrial (111 aa).

A mitochondrion-targeting transit peptide spans 1-54 (MYYKFSSFTQKLAGAWASEAYTPQGLKPVSTEAPPIIFATPTKLTSSVTAYDYS). Residue Lys68 is modified to N6-acetyllysine. Residues 79 to 104 (PDQMLYRTTMALTLGGTIYCLIALYM) traverse the membrane as a helical segment.

It belongs to the cytochrome c oxidase VIIa family.

It is found in the mitochondrion inner membrane. Functionally, non-functional protein. In contrast to the protein found in other strains (AC Q99KD6), cannot induce the assembly of mitochondrial respiratory supercomplexes. This Mus musculus (Mouse) protein is Cytochrome c oxidase subunit 7A2-like, mitochondrial.